Here is a 345-residue protein sequence, read N- to C-terminus: S-adenosylmethionine:tRNA ribosyltransferase-isomerase (345 aa).

This sequence belongs to the QueA family. As to quaternary structure, monomer.

It localises to the cytoplasm. The enzyme catalyses 7-aminomethyl-7-carbaguanosine(34) in tRNA + S-adenosyl-L-methionine = epoxyqueuosine(34) in tRNA + adenine + L-methionine + 2 H(+). The protein operates within tRNA modification; tRNA-queuosine biosynthesis. In terms of biological role, transfers and isomerizes the ribose moiety from AdoMet to the 7-aminomethyl group of 7-deazaguanine (preQ1-tRNA) to give epoxyqueuosine (oQ-tRNA). The chain is S-adenosylmethionine:tRNA ribosyltransferase-isomerase from Helicobacter pylori (strain G27).